The chain runs to 351 residues: Phenylalanine--tRNA ligase alpha subunit (351 aa).

Position 276 (Glu276) interacts with Mg(2+).

It belongs to the class-II aminoacyl-tRNA synthetase family. Phe-tRNA synthetase alpha subunit type 1 subfamily. As to quaternary structure, tetramer of two alpha and two beta subunits. The cofactor is Mg(2+).

The protein localises to the cytoplasm. The enzyme catalyses tRNA(Phe) + L-phenylalanine + ATP = L-phenylalanyl-tRNA(Phe) + AMP + diphosphate + H(+). The polypeptide is Phenylalanine--tRNA ligase alpha subunit (Psychrobacter arcticus (strain DSM 17307 / VKM B-2377 / 273-4)).